The primary structure comprises 155 residues: UPF0178 protein RPC_3085 (155 aa).

Belongs to the UPF0178 family.

This chain is UPF0178 protein RPC_3085, found in Rhodopseudomonas palustris (strain BisB18).